Consider the following 76-residue polypeptide: uncharacterized protein (76 aa).

The protein to L.innocua lin1255, lin1742 and lin2600.

This is an uncharacterized protein from Listeria innocua serovar 6a (strain ATCC BAA-680 / CLIP 11262).